The primary structure comprises 515 residues: Maturase K (515 aa).

The protein belongs to the intron maturase 2 family. MatK subfamily.

The protein localises to the plastid. The protein resides in the chloroplast. Functionally, usually encoded in the trnK tRNA gene intron. Probably assists in splicing its own and other chloroplast group II introns. This chain is Maturase K, found in Pinus pumila (Dwarf Siberian pine).